The sequence spans 135 residues: Large ribosomal subunit protein uL16c (135 aa).

It belongs to the universal ribosomal protein uL16 family. As to quaternary structure, part of the 50S ribosomal subunit.

The protein resides in the plastid. It is found in the chloroplast. This Piper cenocladum (Ant piper) protein is Large ribosomal subunit protein uL16c.